The primary structure comprises 386 residues: MNLHEFQAKALFREHGIPVPEGVAVSDPAALGEAISSLGGDAWVVKAQVHAGGRGKAGGVRLVKGSRELEHAVGELLGGRLATHQTGPAGLPINTVLVESLTDIGRELYLSLLVDRARRRVAIMASAAGGMDIETVAAESPEKIITLHVDPAAGYMPYQGRRVAFALGLEGPQVSALVKLLGQLYRLFVDSDASLVEINPLVVTKTGELIALDAKINLDDNGLYRHQALAELRDETQEDAREARAREHELNYVRLDGNIGCMVNGAGLAMATMDLIKLHGGEPANFLDVGGGTTAARVAEAFKLILSDEAVKAVFVNIFGGIVRCDLIAEGIINAVKEVHVTVPVVVRLEGTNVDQGKQMLAESGLNIITAESLTDGARRVVASVQ.

The 236-residue stretch at 9–244 (KALFREHGIP…ETQEDAREAR (236 aa)) folds into the ATP-grasp domain. ATP is bound by residues Lys-46, 53-55 (GRG), Glu-99, Thr-102, and Glu-107. 2 residues coordinate Mg(2+): Asn-199 and Asp-213. Residues Asn-264 and 321–323 (GIV) each bind substrate.

This sequence belongs to the succinate/malate CoA ligase beta subunit family. In terms of assembly, heterotetramer of two alpha and two beta subunits. The cofactor is Mg(2+).

It catalyses the reaction succinate + ATP + CoA = succinyl-CoA + ADP + phosphate. The enzyme catalyses GTP + succinate + CoA = succinyl-CoA + GDP + phosphate. Its pathway is carbohydrate metabolism; tricarboxylic acid cycle; succinate from succinyl-CoA (ligase route): step 1/1. In terms of biological role, succinyl-CoA synthetase functions in the citric acid cycle (TCA), coupling the hydrolysis of succinyl-CoA to the synthesis of either ATP or GTP and thus represents the only step of substrate-level phosphorylation in the TCA. The beta subunit provides nucleotide specificity of the enzyme and binds the substrate succinate, while the binding sites for coenzyme A and phosphate are found in the alpha subunit. This is Succinate--CoA ligase [ADP-forming] subunit beta from Thioalkalivibrio sulfidiphilus (strain HL-EbGR7).